The chain runs to 54 residues: MQEIVGYLVKNPEVLDEVMKGRASLLNIDKDQLKSIVDAFGGLQIYTNGNWVPS.

The propeptide occupies 1-46 (MQEIVGYLVKNPEVLDEVMKGRASLLNIDKDQLKSIVDAFGGLQIY). Tryptophan 51 carries the 3'-geranyl-2',N2-cyclotryptophan lipid modification.

As to quaternary structure, interacts directly with the sensor histidine kinase ComP and stimulates its activity. Post-translationally, trp-51 is modified by isoprenylation, probably by geranylation, which is essential for activity. Modified by the tryptophan prenyltransferase ComQ before export to the extracellular environment. The type of isoprenyl derivative differs among the different pherotypes and depends on ComX primary sequence.

Its subcellular location is the secreted. Functionally, part of a major quorum-sensing system that regulates the development of genetic competence. Acts through the activation of the two-component regulatory system ComP/ComA composed of a sensor histidine kinase, ComP, and a response regulator, ComA. The chain is ComX pheromone from Bacillus mojavensis.